Consider the following 324-residue polypeptide: Glutathione synthetase (324 aa).

Residues 125–312 (EKLFTTTHFP…ISTIILDNLE (188 aa)) enclose the ATP-grasp domain. 152 to 209 (FIKTYKDIIIKPLHGMAGLSIFRIKEHDPNTSVIIETMTKYETIPCISQNYITDIQKG) is an ATP binding site. 2 residues coordinate Mg(2+): Glu283 and Asn285.

Belongs to the prokaryotic GSH synthase family. Requires Mg(2+) as cofactor. The cofactor is Mn(2+).

The enzyme catalyses gamma-L-glutamyl-L-cysteine + glycine + ATP = glutathione + ADP + phosphate + H(+). The protein operates within sulfur metabolism; glutathione biosynthesis; glutathione from L-cysteine and L-glutamate: step 2/2. The chain is Glutathione synthetase from Buchnera aphidicola subsp. Baizongia pistaciae (strain Bp).